The chain runs to 303 residues: Elongation factor Ts (303 aa).

The tract at residues 80 to 83 is involved in Mg(2+) ion dislocation from EF-Tu; that stretch reads TDFV.

The protein belongs to the EF-Ts family.

Its subcellular location is the cytoplasm. Its function is as follows. Associates with the EF-Tu.GDP complex and induces the exchange of GDP to GTP. It remains bound to the aminoacyl-tRNA.EF-Tu.GTP complex up to the GTP hydrolysis stage on the ribosome. In Clostridium perfringens (strain ATCC 13124 / DSM 756 / JCM 1290 / NCIMB 6125 / NCTC 8237 / Type A), this protein is Elongation factor Ts.